Reading from the N-terminus, the 560-residue chain is Choline/ethanolamine transporter FLVCR1 (560 aa).

Residues 1–43 (MARPDDEVGPAVAPGHPLGKGYLPVPKGAPDGEARLVPQNGPE) form a disordered region. Topologically, residues 1 to 92 (MARPDDEVGP…EDVPCPACPP (92 aa)) are cytoplasmic. The chain crosses the membrane as a helical span at residues 93–117 (RTALSPRRFVVLLIFSLYSLVNAFQ). Residues 118–135 (WIQYSSISNVFEDFYEVS) are Extracellular-facing. Residues 136-163 (PLHINWLSMVYMVAYVPLIFPATWLLDT) traverse the membrane as a helical segment. Residues 164–165 (RG) lie on the Cytoplasmic side of the membrane. Residues 166–185 (LRLTALLGSGLNCLGAWVKC) traverse the membrane as a helical segment. At 186–192 (GSVQRHL) the chain is on the extracellular side. The helical transmembrane segment at 193–221 (FWVTMLGQILCSVAQVFILGLPSPVASVW) threads the bilayer. Glutamine 207 contacts ethanolamine. Over 222 to 226 (FGPKE) the chain is Cytoplasmic. Residues 227–252 (VSTACATAVLGNQLGTAVGFLLPPVL) form a helical membrane-spanning segment. Over 253–270 (VPALGTQNSTGLLAHTQN) the chain is Extracellular. N-linked (GlcNAc...) asparagine glycosylation is present at asparagine 270. A helical membrane pass occupies residues 271–300 (NTDLLAHNINTMFYGTAFISTFLFFLTIIA). At 301-336 (FKEKPPLPPSQAQAVLRDSPPEEYSYKSSIWNLCRN) the chain is on the cytoplasmic side. A helical membrane pass occupies residues 337 to 367 (IPFVLLLVSYGIMTGAFYSISTLLNQIILTY). Residues 368 to 371 (YVGE) lie on the Extracellular side of the membrane. The helical transmembrane segment at 372–400 (EVNAGRIGLTLVVAGMVGSILCGLWLDYT) threads the bilayer. Topologically, residues 401–402 (KT) are cytoplasmic. The helical transmembrane segment at 403–425 (YKQTTLIVYVLSFIGMLIFTFTL) threads the bilayer. The Extracellular portion of the chain corresponds to 426 to 428 (NLG). The helical transmembrane segment at 429–458 (YIIVVFFTGGILGFFMTGYLPLGFEFAVEI) threads the bilayer. The Cytoplasmic segment spans residues 459–466 (TYPESEGM). A helical membrane pass occupies residues 467–492 (SSGLLNTAAQILGIFFTLAQGKITTD). Residue glutamine 476 participates in ethanolamine binding. Glutamine 476 is a binding site for choline. The Extracellular segment spans residues 493 to 495 (YNS). The helical transmembrane segment at 496–518 (PEAGNIFLCAWMFVGIILTALIK) threads the bilayer. Over 519-560 (SDLRRHNINTGLTNIDVKAVPVDSRVDPKPKVMVSIQSESSL) the chain is Cytoplasmic. Serine 542 bears the Phosphoserine mark.

Belongs to the major facilitator superfamily. Feline leukemia virus subgroup C receptor (TC 2.A.1.28.1) family.

Its subcellular location is the cell membrane. It localises to the mitochondrion membrane. It carries out the reaction choline(out) = choline(in). The catalysed reaction is ethanolamine(in) = ethanolamine(out). The enzyme catalyses heme b(in) = heme b(out). Functionally, uniporter that mediates the transport of extracellular choline and ethanolamine into cells, thereby playing a key role in phospholipid biosynthesis. Choline and ethanolamine are the precursors of phosphatidylcholine and phosphatidylethanolamine, respectively, the two most abundant phospholipids. Transport is not coupled with proton transport and is exclusively driven by the choline (or ethanolamine) gradient across the plasma membrane. Also acts as a heme b transporter that mediates heme efflux from the cytoplasm to the extracellular compartment. In terms of biological role, uniporter that mediates the transport of extracellular choline and ethanolamine into cells. Choline and ethanolamine are the precursors of phosphatidylcholine and phosphatidylethanolamine, respectively, the two most abundant phospholipids. Transport is not coupled with proton transport and is exclusively driven by the choline (or ethanolamine) gradient across the plasma membrane. Also acts as a heme b transporter that mediates heme efflux from the cytoplasm to the extracellular compartment. Heme export depends on the presence of HPX and is required to maintain intracellular free heme balance, protecting cells from heme toxicity. Heme export provides protection from heme or ferrous iron toxicities in liver, brain, sensory neurons and during erythropoiesis, a process in which heme synthesis intensifies. Possibly export coproporphyrin and protoporphyrin IX, which are both intermediate products in the heme biosynthetic pathway. Does not export bilirubin. The molecular mechanism of heme transport, whether electrogenic, electroneutral or coupled to other ions, remains to be elucidated. Its function is as follows. Heme transporter that promotes heme efflux from the mitochondrion to the cytoplasm. Essential for erythroid differentiation. This is Choline/ethanolamine transporter FLVCR1 (Flvcr1) from Mus musculus (Mouse).